The primary structure comprises 335 residues: Beta-hexosaminidase (335 aa).

Substrate contacts are provided by residues D60, R68, R133, and K163–H164. Residue H176 is the Proton donor/acceptor of the active site. D247 serves as the catalytic Nucleophile.

This sequence belongs to the glycosyl hydrolase 3 family. NagZ subfamily.

It is found in the cytoplasm. It carries out the reaction Hydrolysis of terminal non-reducing N-acetyl-D-hexosamine residues in N-acetyl-beta-D-hexosaminides.. Its pathway is cell wall biogenesis; peptidoglycan recycling. Functionally, plays a role in peptidoglycan recycling by cleaving the terminal beta-1,4-linked N-acetylglucosamine (GlcNAc) from peptide-linked peptidoglycan fragments, giving rise to free GlcNAc, anhydro-N-acetylmuramic acid and anhydro-N-acetylmuramic acid-linked peptides. In Stenotrophomonas maltophilia (strain R551-3), this protein is Beta-hexosaminidase.